The sequence spans 345 residues: Acyl-CoA--sterol O-acyltransferase 1 (345 aa).

The next 9 helical transmembrane spans lie at 1–21, 32–52, 54–74, 86–106, 120–140, 148–168, 231–251, 258–278, and 291–311; these read MASFIKAWGLVIISLCYTFFI, LILFFPVFLIFFIVPFLIYSL, LLGITAFFIAWLANFKLLLFA, PLSLPIFLAVSCLPIKIQLSP, GPLIYTIKAVFVVLIIKAYEY, VVLTLYAIHIYFALEIILAAT, ILAAFGTFVVSGIMHELIFFY, DWKMMWFFLINGFCTTVEIAI, and AISQVLTLTFVMVTALWLFLP.

Belongs to the wax synthase family.

The protein resides in the membrane. Functionally, involved in the esterification of cycloartenol. Not implicated in the formation of sterol esters in flowers or during seed maturation. Has a substrate preference toward saturated fatty acyl donors (16:0 &gt; 18:0 &gt; 16:1 &gt; 18:1). Does not require triacyglycerols (TAGs) as a fatty acyl donor, and is unable to acylate diacylglycerol to produce TAG. This Arabidopsis thaliana (Mouse-ear cress) protein is Acyl-CoA--sterol O-acyltransferase 1 (ASAT1).